We begin with the raw amino-acid sequence, 233 residues long: Lipoprotein-releasing system ATP-binding protein LolD (233 aa).

The region spanning 6–233 (LQCDNLCKRY…TAELSLMGAE (228 aa)) is the ABC transporter domain. 42-49 (GSSGSGKS) contributes to the ATP binding site.

This sequence belongs to the ABC transporter superfamily. Lipoprotein translocase (TC 3.A.1.125) family. As to quaternary structure, the complex is composed of two ATP-binding proteins (LolD) and two transmembrane proteins (LolC and LolE).

It is found in the cell inner membrane. Functionally, part of the ABC transporter complex LolCDE involved in the translocation of mature outer membrane-directed lipoproteins, from the inner membrane to the periplasmic chaperone, LolA. Responsible for the formation of the LolA-lipoprotein complex in an ATP-dependent manner. The sequence is that of Lipoprotein-releasing system ATP-binding protein LolD from Shigella flexneri.